Reading from the N-terminus, the 126-residue chain is Large ribosomal subunit protein bL12 (126 aa).

It belongs to the bacterial ribosomal protein bL12 family. In terms of assembly, homodimer. Part of the ribosomal stalk of the 50S ribosomal subunit. Forms a multimeric L10(L12)X complex, where L10 forms an elongated spine to which 2 to 4 L12 dimers bind in a sequential fashion. Binds GTP-bound translation factors.

Forms part of the ribosomal stalk which helps the ribosome interact with GTP-bound translation factors. Is thus essential for accurate translation. The polypeptide is Large ribosomal subunit protein bL12 (Methylocella silvestris (strain DSM 15510 / CIP 108128 / LMG 27833 / NCIMB 13906 / BL2)).